The following is a 265-amino-acid chain: Serine protease 1 (265 aa).

An N-terminal signal peptide occupies residues 1 to 21; the sequence is MKLFVFLALAVAAATAVPAPA. The propeptide occupies 22–35; sequence QKLTPTPIKDIQGR. One can recognise a Peptidase S1 domain in the interval 36–262; sequence ITNGYPAYEG…YLDWIRDNTG (227 aa). Cysteine 63 and cysteine 79 are disulfide-bonded. Catalysis depends on charge relay system residues histidine 78 and aspartate 123. Disulfide bonds link cysteine 189–cysteine 201 and cysteine 211–cysteine 239. Serine 215 functions as the Charge relay system in the catalytic mechanism.

It belongs to the peptidase S1 family. In terms of tissue distribution, abundantly expressed in the larval gut.

Its function is as follows. Major function may be to aid in digestion. The sequence is that of Serine protease 1 from Drosophila melanogaster (Fruit fly).